The sequence spans 60 residues: Protein K12 (60 aa).

In Human herpesvirus 8 type P (isolate GK18) (HHV-8), this protein is Protein K12 (K12).